An 835-amino-acid chain; its full sequence is Cap-specific mRNA (nucleoside-2'-O-)-methyltransferase 1 (835 aa).

Residues 2-19 (RRRNDPECTAPIKKQKKR) carry the Bipartite nuclear localization signal motif. Residues 24–68 (ALNLSAASGDEPPSSVNHAAKASTTSLSGSDSETEGKQHGSDSFD) form a disordered region. Ser-28, Ser-31, Ser-53, Ser-66, and Ser-91 each carry phosphoserine. The span at 37–54 (SSVNHAAKASTTSLSGSD) shows a compositional bias: polar residues. Basic and acidic residues predominate over residues 57–68 (TEGKQHGSDSFD). The G-patch domain occupies 87 to 133 (YNSVSQKLMAKMGFREGEGLGKYSQGRKDIVEASNQKGRRGLGLTLQ). Lys-108 is modified (N6-acetyllysine). Residues 203-207 (KSVFD) and Arg-218 contribute to the substrate site. Residues 231–450 (FFLNRAAMKM…ERYVVCKGLK (220 aa)) form the RrmJ-type SAM-dependent 2'-O-MTase domain. Residue Asn-234 coordinates S-adenosyl-L-methionine. The active site involves Lys-239. S-adenosyl-L-methionine-binding positions include 277-283 (CAGPGGF) and 335-336 (DI). Asp-364 is a catalytic residue. A substrate-binding site is contributed by 374–376 (NLQ). The active-site Proton acceptor is Lys-404. Asn-439 contacts substrate. The tract at residues 727-835 (SSGTPKLSYT…VLSFIQTHSA (109 aa)) is interaction with POLR2A. Positions 752-786 (RTVNEPWTMGFSKSFKRKFFYNKKTKISTFDLPAD) constitute a WW domain.

In terms of assembly, interacts with POLR2A (via C-terminus).

The protein resides in the nucleus. The enzyme catalyses a 5'-end (N(7)-methyl 5'-triphosphoguanosine)-ribonucleoside in mRNA + S-adenosyl-L-methionine = a 5'-end (N(7)-methyl 5'-triphosphoguanosine)-(2'-O-methyl-ribonucleoside) in mRNA + S-adenosyl-L-homocysteine + H(+). Its function is as follows. S-adenosyl-L-methionine-dependent methyltransferase that mediates mRNA cap1 2'-O-ribose methylation to the 5'-cap structure of mRNAs. Methylates the ribose of the first nucleotide of a m(7)GpppG-capped mRNA and small nuclear RNA (snRNA) to produce m(7)GpppRm (cap1). Displays a preference for cap0 transcripts. Cap1 modification is linked to higher levels of translation. May be involved in the interferon response pathway. This is Cap-specific mRNA (nucleoside-2'-O-)-methyltransferase 1 (CMTR1) from Ailuropoda melanoleuca (Giant panda).